Here is a 63-residue protein sequence, read N- to C-terminus: Large ribosomal subunit protein uL29 (63 aa).

Belongs to the universal ribosomal protein uL29 family.

This Shewanella frigidimarina (strain NCIMB 400) protein is Large ribosomal subunit protein uL29.